We begin with the raw amino-acid sequence, 207 residues long: Large ribosomal subunit protein uL4 (207 aa).

Residues 56–76 are disordered; the sequence is EVRGGGRKPWRQKGTGRARAG. Over residues 60–71 the composition is skewed to basic residues; sequence GGRKPWRQKGTG.

Belongs to the universal ribosomal protein uL4 family. Part of the 50S ribosomal subunit.

In terms of biological role, one of the primary rRNA binding proteins, this protein initially binds near the 5'-end of the 23S rRNA. It is important during the early stages of 50S assembly. It makes multiple contacts with different domains of the 23S rRNA in the assembled 50S subunit and ribosome. Its function is as follows. Forms part of the polypeptide exit tunnel. The protein is Large ribosomal subunit protein uL4 of Desulfitobacterium hafniense (strain DSM 10664 / DCB-2).